Consider the following 208-residue polypeptide: Outer-membrane lipoprotein carrier protein (208 aa).

The signal sequence occupies residues 1-25 (MKKLFSAKLFSALVLSFSLFSTAHA).

Belongs to the LolA family. In terms of assembly, monomer.

It is found in the periplasm. In terms of biological role, participates in the translocation of lipoproteins from the inner membrane to the outer membrane. Only forms a complex with a lipoprotein if the residue after the N-terminal Cys is not an aspartate (The Asp acts as a targeting signal to indicate that the lipoprotein should stay in the inner membrane). The sequence is that of Outer-membrane lipoprotein carrier protein from Vibrio campbellii (strain ATCC BAA-1116).